A 188-amino-acid polypeptide reads, in one-letter code: Adenine phosphoribosyltransferase (188 aa).

This sequence belongs to the purine/pyrimidine phosphoribosyltransferase family. As to quaternary structure, homodimer.

The protein resides in the cytoplasm. The enzyme catalyses AMP + diphosphate = 5-phospho-alpha-D-ribose 1-diphosphate + adenine. Its pathway is purine metabolism; AMP biosynthesis via salvage pathway; AMP from adenine: step 1/1. In terms of biological role, catalyzes a salvage reaction resulting in the formation of AMP, that is energically less costly than de novo synthesis. This Neisseria meningitidis serogroup B (strain ATCC BAA-335 / MC58) protein is Adenine phosphoribosyltransferase.